Here is an 846-residue protein sequence, read N- to C-terminus: FNIP repeat-containing protein DDB_G0289381 (846 aa).

The span at 1–11 (MKLLSFKKKPS) shows a compositional bias: basic residues. Residues 1–39 (MKLLSFKKKPSLTKSQSCPDKLKNLKEQQKDPKNGANYD) form a disordered region. Over residues 20 to 33 (DKLKNLKEQQKDPK) the composition is skewed to basic and acidic residues. FNIP repeat units follow at residues 159 to 193 (IPNHIEKLIFSNEFDKPIKAGTIPQSVVEIEFGEK), 194 to 239 (FNQV…FGNN), 240 to 283 (FDQI…FQEN), and 284 to 325 (FNQP…YGGD). The tract at residues 362–384 (SSISLDISGGGSGSGSGVNSTTT) is disordered. FNIP repeat units lie at residues 458 to 500 (FQQL…FGDG), 501 to 546 (FNQQ…FGKS), and 654 to 693 (FNQSIKNLPENLTSLSLGTSFSQNLINLPNSLIELKMFNK). Residues 702-734 (SNNNNENNNENNNENNNENNNENNNENNNNTNS) are disordered. The stretch at 702–734 (SNNNNENNNENNNENNNENNNENNNENNNNTNS) forms a coiled coil.

The sequence is that of FNIP repeat-containing protein DDB_G0289381 from Dictyostelium discoideum (Social amoeba).